The chain runs to 345 residues: Uroporphyrinogen decarboxylase (345 aa).

Substrate contacts are provided by residues 27-31 (RQAGR), F46, D76, Y152, S207, and H320.

It belongs to the uroporphyrinogen decarboxylase family. As to quaternary structure, homodimer.

It is found in the cytoplasm. The enzyme catalyses uroporphyrinogen III + 4 H(+) = coproporphyrinogen III + 4 CO2. It functions in the pathway porphyrin-containing compound metabolism; protoporphyrin-IX biosynthesis; coproporphyrinogen-III from 5-aminolevulinate: step 4/4. In terms of biological role, catalyzes the decarboxylation of four acetate groups of uroporphyrinogen-III to yield coproporphyrinogen-III. The polypeptide is Uroporphyrinogen decarboxylase (Geobacillus sp. (strain WCH70)).